Consider the following 699-residue polypeptide: Macoilin-2 (699 aa).

4 helical membrane-spanning segments follow: residues 28-48 (TFLY…DFVL), 75-95 (AFSV…LLFI), 120-140 (VCLP…AIRF), and 154-174 (FAAH…KSYV). Disordered regions lie at residues 219–289 (AAAA…SILP), 322–411 (LLKD…PNNQ), 432–451 (LQAS…SLGT), and 679–699 (FMDT…PLKK). Residues Asn-241, Asn-267, Asn-345, and Asn-365 are each glycosylated (N-linked (GlcNAc...) asparagine). The segment covering 257–271 (LEYREKERGKNESKK) has biased composition (basic and acidic residues). Residues 329–346 (SSSSSSTSSNSNKNYKNA) are compositionally biased toward low complexity. A compositionally biased stretch (low complexity) spans 366–382 (GSVPSSSGPSSSASSSS). Asn-690 carries an N-linked (GlcNAc...) asparagine glycan.

It belongs to the macoilin family.

It is found in the nucleus membrane. Its subcellular location is the cell projection. The protein resides in the axon. It localises to the rough endoplasmic reticulum membrane. May play a role in the regulation of neuronal activity. The sequence is that of Macoilin-2 from Danio rerio (Zebrafish).